Reading from the N-terminus, the 104-residue chain is uncharacterized protein (104 aa).

Residues 51-70 form a disordered region; the sequence is NPGRSLDNNKDVSDKGRSEF. Residues 57–70 show a composition bias toward basic and acidic residues; the sequence is DNNKDVSDKGRSEF.

Belongs to the protein-tyrosine phosphatase family.

This is an uncharacterized protein from Xanthomonas campestris pv. campestris (strain ATCC 33913 / DSM 3586 / NCPPB 528 / LMG 568 / P 25).